A 110-amino-acid chain; its full sequence is Phosphoribosyl-AMP cyclohydrolase (110 aa).

Aspartate 74 serves as a coordination point for Mg(2+). Zn(2+) is bound at residue cysteine 75. Residues aspartate 76 and aspartate 78 each contribute to the Mg(2+) site. The Zn(2+) site is built by cysteine 91 and cysteine 98.

This sequence belongs to the PRA-CH family. In terms of assembly, homodimer. Requires Mg(2+) as cofactor. Zn(2+) is required as a cofactor.

It localises to the cytoplasm. The catalysed reaction is 1-(5-phospho-beta-D-ribosyl)-5'-AMP + H2O = 1-(5-phospho-beta-D-ribosyl)-5-[(5-phospho-beta-D-ribosylamino)methylideneamino]imidazole-4-carboxamide. Its pathway is amino-acid biosynthesis; L-histidine biosynthesis; L-histidine from 5-phospho-alpha-D-ribose 1-diphosphate: step 3/9. In terms of biological role, catalyzes the hydrolysis of the adenine ring of phosphoribosyl-AMP. The protein is Phosphoribosyl-AMP cyclohydrolase of Lacticaseibacillus casei (strain BL23) (Lactobacillus casei).